A 187-amino-acid polypeptide reads, in one-letter code: Protein GrpE (187 aa).

The tract at residues 1 to 25 (MADEQNLDNRAPEETPAAEGTSAGE) is disordered.

This sequence belongs to the GrpE family. In terms of assembly, homodimer.

The protein resides in the cytoplasm. Participates actively in the response to hyperosmotic and heat shock by preventing the aggregation of stress-denatured proteins, in association with DnaK and GrpE. It is the nucleotide exchange factor for DnaK and may function as a thermosensor. Unfolded proteins bind initially to DnaJ; upon interaction with the DnaJ-bound protein, DnaK hydrolyzes its bound ATP, resulting in the formation of a stable complex. GrpE releases ADP from DnaK; ATP binding to DnaK triggers the release of the substrate protein, thus completing the reaction cycle. Several rounds of ATP-dependent interactions between DnaJ, DnaK and GrpE are required for fully efficient folding. The chain is Protein GrpE from Azotobacter vinelandii (strain DJ / ATCC BAA-1303).